We begin with the raw amino-acid sequence, 429 residues long: Adenylosuccinate synthetase (429 aa).

GTP contacts are provided by residues 12–18 (GDEGKGK) and 40–42 (GHT). The active-site Proton acceptor is Asp-13. Positions 13 and 40 each coordinate Mg(2+). IMP is bound by residues 13-16 (DEGK), 38-41 (NAGH), Thr-128, Arg-142, Gln-223, Thr-238, and Arg-302. His-41 serves as the catalytic Proton donor. Residue 298–304 (TVTGRPR) participates in substrate binding. GTP is bound by residues Arg-304, 330-332 (LLD), and 412-414 (SVG).

Belongs to the adenylosuccinate synthetase family. As to quaternary structure, homodimer. The cofactor is Mg(2+).

Its subcellular location is the cytoplasm. It carries out the reaction IMP + L-aspartate + GTP = N(6)-(1,2-dicarboxyethyl)-AMP + GDP + phosphate + 2 H(+). It participates in purine metabolism; AMP biosynthesis via de novo pathway; AMP from IMP: step 1/2. Plays an important role in the de novo pathway of purine nucleotide biosynthesis. Catalyzes the first committed step in the biosynthesis of AMP from IMP. The chain is Adenylosuccinate synthetase from Lactobacillus gasseri (strain ATCC 33323 / DSM 20243 / BCRC 14619 / CIP 102991 / JCM 1131 / KCTC 3163 / NCIMB 11718 / NCTC 13722 / AM63).